The following is a 431-amino-acid chain: Enolase (431 aa).

Q166 provides a ligand contact to (2R)-2-phosphoglycerate. The active-site Proton donor is the E208. The Mg(2+) site is built by D245, E288, and D315. Residues K340, R369, S370, and K391 each coordinate (2R)-2-phosphoglycerate. K340 functions as the Proton acceptor in the catalytic mechanism.

Belongs to the enolase family. Mg(2+) serves as cofactor.

It localises to the cytoplasm. Its subcellular location is the secreted. The protein resides in the cell surface. The enzyme catalyses (2R)-2-phosphoglycerate = phosphoenolpyruvate + H2O. The protein operates within carbohydrate degradation; glycolysis; pyruvate from D-glyceraldehyde 3-phosphate: step 4/5. In terms of biological role, catalyzes the reversible conversion of 2-phosphoglycerate (2-PG) into phosphoenolpyruvate (PEP). It is essential for the degradation of carbohydrates via glycolysis. This is Enolase from Clostridium perfringens (strain ATCC 13124 / DSM 756 / JCM 1290 / NCIMB 6125 / NCTC 8237 / Type A).